Reading from the N-terminus, the 292-residue chain is Coiled-coil domain-containing protein 137 (292 aa).

A compositionally biased stretch (low complexity) spans 1–16; that stretch reads MAGLRRGAAAVAPAGT. Disordered regions lie at residues 1-94, 139-183, 205-243, and 263-292; these read MAGL…AQAA, FLSK…EKAA, PELT…LTTS, and ALKR…EMQL. 3 stretches are compositionally biased toward basic and acidic residues: residues 57-78, 155-164, and 173-183; these read KNQD…RQEM, PKKEKSERKK, and KARQRREEKAA. A coiled-coil region spans residues 156-194; that stretch reads KKEKSERKKAFQKRRLDKARQRREEKAAERLEQELLQDT. A compositionally biased stretch (low complexity) spans 222-232; that stretch reads KKSLMLKKLLS. Position 232 is a phosphoserine (serine 232). Polar residues predominate over residues 234–243; sequence GSVSQPLTTS. Positions 247-276 form a coiled coil; it reads QRIVAEERERAVNAYRALKRLQQQRQETQS.

It is found in the chromosome. The sequence is that of Coiled-coil domain-containing protein 137 (CCDC137) from Bos taurus (Bovine).